The chain runs to 1073 residues: Probable nuclear hormone receptor HR38 (1073 aa).

Disordered regions lie at residues 55–87, 150–185, 263–326, 437–458, 492–514, 529–579, and 618–640; these read NLNAPTHQQSHTSHLQHAQQHQTHQQHPLLPPP, TPAPPATEPRKIKPLGAGKLKVGKTDSNSDSNSNCD, TQTA…LVSP, ALHAQQQQQQQQQQQQQQQQHQ, KYNSSSGSSPQQASSSSTAAPTP, PPLS…NSGG, and GQQQQQQQQSYQQHNYNSHNGER. Composition is skewed to low complexity over residues 59–82, 175–185, and 263–277; these read PTHQQSHTSHLQHAQQHQTHQQHP, DSNSDSNSNCD, and TQTASTTTTTSASAA. The span at 279-291 shows a compositional bias: basic residues; sequence HHQHHNHLLHQQH. 3 stretches are compositionally biased toward low complexity: residues 292-326, 441-458, and 495-514; these read HNQQQQQQQQQQQQQQQQQQQEHLQQQHQQQLVSP, QQQQQQQQQQQQQQQQHQ, and SSSGSSPQQASSSSTAAPTP. Over residues 619–636 the composition is skewed to low complexity; sequence QQQQQQQQSYQQHNYNSH. Positions 741-816 form a DNA-binding region, nuclear receptor; it reads SQLCAVCGDT…VGMVKEVVRT (76 aa). 2 consecutive NR C4-type zinc fingers follow at residues 744–764 and 780–804; these read CAVCGDTAACQHYGVRTCEGC and CLADKNCPVDKRRRNRCQFCRFQKC. Positions 819–841 are disordered; sequence LKGRRGRLPSKPKSPQESPPSPP. The NR LBD domain maps to 840 to 1070; it reads PPISLITALV…ALIENMFVTT (231 aa).

The protein belongs to the nuclear hormone receptor family. NR4 subfamily. As to quaternary structure, forms a heterodimer with USP. Ubiquitously expressed in preblastoderm embryos, specifically in central nervous system and intestinal tract. Highly expressed in third instar larval imaginal disks and brain complexes, but not in ovaries.

Its subcellular location is the nucleus. In terms of biological role, binds to NGFI-B response elements. Plays an important role in late stages of epidermal metamorphosis. The sequence is that of Probable nuclear hormone receptor HR38 (Hr38) from Drosophila melanogaster (Fruit fly).